The following is an 854-amino-acid chain: DNA topoisomerase 1 type prokaryotic (854 aa).

A Toprim domain is found at 2-110 (SILILLESPG…KRLRFNAITK (109 aa)). Glu-8 and Asp-79 together coordinate Mg(2+). Positions 124 to 610 (DKNLVDAQKA…DFYDKLKPIV (487 aa)) constitute a Topo IA-type catalytic domain. Residues 158–163 (SAGRVQ) are interaction with DNA. Residue Tyr-302 is the O-(5'-phospho-DNA)-tyrosine intermediate of the active site. The interval 802 to 854 (KSAPKGGSKTIRKPSQTKYSQTKSTKSTKSTKSTNKKFVGKSAKKTTKKTTKK) is disordered. Residues 814–834 (KPSQTKYSQTKSTKSTKSTKS) show a composition bias toward low complexity. Positions 835 to 854 (TNKKFVGKSAKKTTKKTTKK) are enriched in basic residues.

The protein belongs to the type IA topoisomerase family. It depends on Mg(2+) as a cofactor.

It localises to the virion. It carries out the reaction ATP-independent breakage of single-stranded DNA, followed by passage and rejoining.. Functionally, releases the supercoiling and torsional tension of DNA, which is introduced during the DNA replication and transcription, by transiently cleaving and rejoining one strand of the DNA duplex. Introduces a single-strand break via transesterification at a target site in duplex DNA. The scissile phosphodiester is attacked by the catalytic tyrosine of the enzyme, resulting in the formation of a DNA-(5'-phosphotyrosyl)-enzyme intermediate and the expulsion of a 3'-OH DNA strand. The free DNA strand then undergoes passage around the unbroken strand, thus removing DNA supercoils. Finally, in the religation step, the DNA 3'-OH attacks the covalent intermediate to expel the active-site tyrosine and restore the DNA phosphodiester backbone. The sequence is that of DNA topoisomerase 1 type prokaryotic (TOP1P) from Acanthamoeba polyphaga (Amoeba).